Consider the following 1019-residue polypeptide: Vacuolar membrane protease (1019 aa).

Residues 1 to 69 (MFLEINFYST…DRIPTVVGFR (69 aa)) are Cytoplasmic-facing. Residues 70-90 (VIPTTVLVLLTYLTIFTLVIV) traverse the membrane as a helical segment. The Vacuolar portion of the chain corresponds to 91 to 404 (TDWLPEPPKN…AELVIFYLND (314 aa)). The N-linked (GlcNAc...) asparagine glycan is linked to N158. Residues H195 and D207 each coordinate Zn(2+). Residue E239 is the Proton acceptor of the active site. E240 provides a ligand contact to Zn(2+). N256 carries an N-linked (GlcNAc...) asparagine glycan. 2 residues coordinate Zn(2+): E265 and H341. A helical membrane pass occupies residues 405-425 (LLIYNVVSLVVGPISLIFFVV). The Cytoplasmic portion of the chain corresponds to 426–466 (CEYVLRNERARQPNGHPVSRPSVLEWLKQRSWLRALWRRSK). Residues 467 to 487 (FWIALVITIALQALLVWGYLA) form a helical membrane-spanning segment. The Vacuolar portion of the chain corresponds to 488-497 (FNSFTVYSSP). Residues 498–518 (YLVLISFFSLAYLSLVIPLTF) form a helical membrane-spanning segment. Residues 519–539 (TFNQTQSPTAKYIAPEREKHT) lie on the Cytoplasmic side of the membrane. A helical membrane pass occupies residues 540–560 (LLIQVYIFTWILLLFSTIAVA). Residues 561–565 (RAQVG) lie on the Vacuolar side of the membrane. The chain crosses the membrane as a helical span at residues 566–586 (GLYFVTAWNTGVWIACLLAAV). Topologically, residues 587–651 (EGMMLPVPQG…ASLRKPQEGG (65 aa)) are cytoplasmic. The disordered stretch occupies residues 603-634 (HSAHHHHHHEHEEDQDADDDDREQRQPPTEAT). Residues 652–672 (VVGWWIVHLLLTIPAPVLLIA) traverse the membrane as a helical segment. The Vacuolar portion of the chain corresponds to 673 to 692 (QMGSLLLDSLPQTLADGSPA). The helical transmembrane segment at 693-713 (YVVYAAASLTAVLLAVPLTPF) threads the bilayer. The Cytoplasmic portion of the chain corresponds to 714–719 (SGKLHR). Residues 720 to 740 (GLFFLFFLSFLIVTAYLWLAF) form a helical membrane-spanning segment. Residues 741 to 1019 (PFSSADPLKV…LVEAWSPFSV (279 aa)) lie on the Vacuolar side of the membrane. N-linked (GlcNAc...) asparagine glycosylation is present at N774.

The protein belongs to the peptidase M28 family. It depends on Zn(2+) as a cofactor.

It is found in the vacuole membrane. In terms of biological role, may be involved in vacuolar sorting and osmoregulation. This is Vacuolar membrane protease from Laccaria bicolor (strain S238N-H82 / ATCC MYA-4686) (Bicoloured deceiver).